The sequence spans 365 residues: Probable caffeine synthase 5 (365 aa).

Residue Tyr18 participates in S-adenosyl-L-homocysteine binding. Thr25 contacts caffeine. S-adenosyl-L-homocysteine-binding residues include Cys61, Asn66, Asp98, Leu99, Ser134, and Phe135. Tyr152, His155, and Trp156 together coordinate caffeine. Mg(2+) contacts are provided by Asn173, Asp259, Phe261, and Asn262. Caffeine is bound at residue Phe317.

This sequence belongs to the methyltransferase superfamily. Type-7 methyltransferase family. Mg(2+) serves as cofactor.

It functions in the pathway alkaloid biosynthesis. In terms of biological role, may be involved in the biosynthesis of caffeine. The chain is Probable caffeine synthase 5 from Camellia sinensis (Tea plant).